Consider the following 1044-residue polypeptide: Probable pre-mRNA-splicing factor ATP-dependent RNA helicase DEAH6 (1044 aa).

Disordered stretches follow at residues 99–134 (EADH…SEQL) and 152–211 (RRKV…VRRD). A compositionally biased stretch (acidic residues) spans 157–167 (EDEDDGTESEE). A compositionally biased stretch (basic and acidic residues) spans 168–211 (ERLRDQREREELEQHLRERDTARTRKLTEPKMSKKEQEEFVRRD). The Helicase ATP-binding domain maps to 414–577 (LNAVKDHQVL…FDQAPIFRFP (164 aa)). Residue 427-434 (GETGSGKT) participates in ATP binding. A DEAH box motif is present at residues 524-527 (DEAH). One can recognise a Helicase C-terminal domain in the interval 599–775 (AITTVLTIHV…SVVLSLKSLG (177 aa)).

The protein belongs to the DEAD box helicase family. DEAH subfamily. PRP2 sub-subfamily. In terms of tissue distribution, predominantly expressed in flowers.

It carries out the reaction ATP + H2O = ADP + phosphate + H(+). Functionally, may be involved in pre-mRNA splicing. This chain is Probable pre-mRNA-splicing factor ATP-dependent RNA helicase DEAH6, found in Arabidopsis thaliana (Mouse-ear cress).